The primary structure comprises 541 residues: T-complex protein 1 subunit epsilon (541 aa).

Ala2 is subject to N-acetylalanine. A Glycyl lysine isopeptide (Lys-Gly) (interchain with G-Cter in SUMO2) cross-link involves residue Lys20. Ser26 is subject to Phosphoserine. Gly53 is a binding site for ADP. An ATP-binding site is contributed by Gly53. Asp104 serves as a coordination point for Mg(2+). Residues Gly105, Thr106, Thr107, and Ser175 each contribute to the ADP site. Residues Thr106 and Thr107 each coordinate ATP. Glycyl lysine isopeptide (Lys-Gly) (interchain with G-Cter in SUMO2) cross-links involve residues Lys210, Lys214, Lys265, Lys275, and Lys279. Ser346 is modified (phosphoserine). Lys392 participates in a covalent cross-link: Glycyl lysine isopeptide (Lys-Gly) (interchain with G-Cter in SUMO2). ADP is bound by residues Gly422, Asp492, Glu508, and Lys513. Gly422 is an ATP binding site. Ser539 carries the phosphoserine modification.

This sequence belongs to the TCP-1 chaperonin family. Component of the chaperonin-containing T-complex (TRiC), a hexadecamer composed of two identical back-to-back stacked rings enclosing a protein folding chamber. Each ring is made up of eight different subunits: TCP1/CCT1, CCT2, CCT3, CCT4, CCT5, CCT6A/CCT6, CCT7, CCT8. Interacts with PACRG. Interacts with DNAAF4. Interacts with DLEC1. Interacts with SPMAP2. Post-translationally, ubiquitinated by the DCX(DCAF12) complex specifically recognizes the diglutamate (Glu-Glu) at the C-terminus, leading to its degradation.

It localises to the cytoplasm. The protein localises to the cytoskeleton. It is found in the microtubule organizing center. The protein resides in the centrosome. The enzyme catalyses ATP + H2O = ADP + phosphate + H(+). Its function is as follows. Component of the chaperonin-containing T-complex (TRiC), a molecular chaperone complex that assists the folding of actin, tubulin and other proteins upon ATP hydrolysis. The TRiC complex mediates the folding of WRAP53/TCAB1, thereby regulating telomere maintenance. As part of the TRiC complex may play a role in the assembly of BBSome, a complex involved in ciliogenesis regulating transports vesicles to the cilia. In Pongo abelii (Sumatran orangutan), this protein is T-complex protein 1 subunit epsilon (CCT5).